Consider the following 408-residue polypeptide: Cobalt-precorrin-5B C(1)-methyltransferase (408 aa).

This sequence belongs to the CbiD family.

The catalysed reaction is Co-precorrin-5B + S-adenosyl-L-methionine = Co-precorrin-6A + S-adenosyl-L-homocysteine. It functions in the pathway cofactor biosynthesis; adenosylcobalamin biosynthesis; cob(II)yrinate a,c-diamide from sirohydrochlorin (anaerobic route): step 6/10. In terms of biological role, catalyzes the methylation of C-1 in cobalt-precorrin-5B to form cobalt-precorrin-6A. In Clostridioides difficile (strain 630) (Peptoclostridium difficile), this protein is Cobalt-precorrin-5B C(1)-methyltransferase.